The sequence spans 149 residues: Putative inactive group IIC secretory phospholipase A2 (149 aa).

The signal sequence occupies residues 1–18 (MKVIAILTLLLFCSPTHS). Cystine bridges form between Cys-44-Cys-142, Cys-77-Cys-107, Cys-95-Cys-112, and Cys-97-Cys-105. Ca(2+) is bound by residues Tyr-45, Gly-47, and Gly-49.

Belongs to the phospholipase A2 family. Ca(2+) serves as cofactor.

It localises to the secreted. Its function is as follows. Inactive phospholipase. The sequence is that of Putative inactive group IIC secretory phospholipase A2 (PLA2G2C) from Homo sapiens (Human).